A 365-amino-acid polypeptide reads, in one-letter code: 3-dehydroquinate synthase (365 aa).

Residues 95-99 (GVVGD), 119-120 (TT), lysine 132, and lysine 141 each bind NAD(+). Zn(2+) contacts are provided by glutamate 174, histidine 238, and histidine 255.

Belongs to the sugar phosphate cyclases superfamily. Dehydroquinate synthase family. Co(2+) serves as cofactor. Zn(2+) is required as a cofactor. It depends on NAD(+) as a cofactor.

It localises to the cytoplasm. The catalysed reaction is 7-phospho-2-dehydro-3-deoxy-D-arabino-heptonate = 3-dehydroquinate + phosphate. It functions in the pathway metabolic intermediate biosynthesis; chorismate biosynthesis; chorismate from D-erythrose 4-phosphate and phosphoenolpyruvate: step 2/7. Catalyzes the conversion of 3-deoxy-D-arabino-heptulosonate 7-phosphate (DAHP) to dehydroquinate (DHQ). This chain is 3-dehydroquinate synthase, found in Chlorobium chlorochromatii (strain CaD3).